A 468-amino-acid chain; its full sequence is ATP synthase subunit beta 3 (468 aa).

Position 155–162 (155–162 (GGAGVGKT)) interacts with ATP.

The protein belongs to the ATPase alpha/beta chains family. In terms of assembly, F-type ATPases have 2 components, CF(1) - the catalytic core - and CF(0) - the membrane proton channel. CF(1) has five subunits: alpha(3), beta(3), gamma(1), delta(1), epsilon(1). CF(0) has three main subunits: a(1), b(2) and c(9-12). The alpha and beta chains form an alternating ring which encloses part of the gamma chain. CF(1) is attached to CF(0) by a central stalk formed by the gamma and epsilon chains, while a peripheral stalk is formed by the delta and b chains.

It is found in the cell inner membrane. The catalysed reaction is ATP + H2O + 4 H(+)(in) = ADP + phosphate + 5 H(+)(out). Its function is as follows. Produces ATP from ADP in the presence of a proton gradient across the membrane. The catalytic sites are hosted primarily by the beta subunits. The protein is ATP synthase subunit beta 3 of Syntrophotalea carbinolica (strain DSM 2380 / NBRC 103641 / GraBd1) (Pelobacter carbinolicus).